Consider the following 244-residue polypeptide: MFSLKMRASRNGKHVSGAERLVTEEKIEEISSELIKRAMGHENGVPDFINLKIEKVTEKINNLKHLEIKTVHSTSKETSRVIARNLLKNELEKYYLKNGKDIEKIDELIDFAFKIIDEGNMRGAAILDLDGNRLETDSNRGIRVKNIDTTDELSEKILGNSSLSERTVDAIAIATKVVNCGVISELCTSDNFSYTTGYIATKDGYFRILNLKGNGEVGGRVFFVENSKIDELYDKLENMPVIVY.

The protein belongs to the BioW family. As to quaternary structure, homodimer. Requires Mg(2+) as cofactor.

The enzyme catalyses heptanedioate + ATP + CoA = 6-carboxyhexanoyl-CoA + AMP + diphosphate. Its pathway is metabolic intermediate metabolism; pimeloyl-CoA biosynthesis; pimeloyl-CoA from pimelate: step 1/1. Catalyzes the transformation of pimelate into pimeloyl-CoA with concomitant hydrolysis of ATP to AMP. The sequence is that of 6-carboxyhexanoate--CoA ligase from Methanococcus maripaludis (strain C7 / ATCC BAA-1331).